The following is a 916-amino-acid chain: Dual serine/threonine and tyrosine protein kinase (916 aa).

The segment covering 1-19 (MQRDGTRSARRMDEGDRRT) has biased composition (basic and acidic residues). Positions 1–27 (MQRDGTRSARRMDEGDRRTGSAGRSGS) are disordered. Residues 641 to 895 (PRIGRELGRG…PLMGIVQPML (255 aa)) enclose the Protein kinase domain. ATP contacts are provided by residues 647 to 655 (LGRGQYGVV) and lysine 670. Aspartate 766 serves as the catalytic Proton acceptor.

It belongs to the protein kinase superfamily. Ser/Thr protein kinase family.

The protein resides in the cytoplasm. It localises to the cell membrane. Its subcellular location is the apical cell membrane. It is found in the basolateral cell membrane. The protein localises to the cell junction. It carries out the reaction L-seryl-[protein] + ATP = O-phospho-L-seryl-[protein] + ADP + H(+). The catalysed reaction is L-threonyl-[protein] + ATP = O-phospho-L-threonyl-[protein] + ADP + H(+). The enzyme catalyses L-tyrosyl-[protein] + ATP = O-phospho-L-tyrosyl-[protein] + ADP + H(+). May act as a positive regulator of ERK phosphorylation downstream of fibroblast growth factor-receptor activation. May induce both caspase-dependent apoptosis and caspase-independent cell death. May play a role in the embryonic development. The chain is Dual serine/threonine and tyrosine protein kinase (dstyk) from Xenopus laevis (African clawed frog).